Here is a 57-residue protein sequence, read N- to C-terminus: Non-structural protein 3a (57 aa).

A signal peptide spans 1 to 22; that stretch reads MIQSPTSFLIVLILLWCKLVLS.

In terms of biological role, involved in resistance to IFN. This is Non-structural protein 3a from Gallus gallus (Chicken).